Consider the following 287-residue polypeptide: O-ureido-serine racemase (287 aa).

Position 20 (asparagine 20) interacts with substrate. The Proton donor role is filled by cysteine 81. Substrate-binding positions include 82 to 83 (GN), asparagine 167, asparagine 200, and 218 to 219 (EY). The Proton acceptor role is filled by cysteine 227. Residue 228–229 (GS) participates in substrate binding.

This sequence belongs to the diaminopimelate epimerase family. As to quaternary structure, monomer.

The protein resides in the cytoplasm. It catalyses the reaction O-ureido-L-serine = O-ureido-D-serine. Inhibited by thiol-inactivating reagents such as iodoacetamide and Hg(2+) ions. Its function is as follows. Involved in the biosynthesis of the antibiotic D-cycloserine (DCS), a cyclic structural analog of D-alanine, used as an antitubercular agent. Catalyzes the stereoinversion of O-ureido-L-serine to O-ureido-D-serine. This Streptomyces lavendulae protein is O-ureido-serine racemase.